Here is a 248-residue protein sequence, read N- to C-terminus: DNA/RNA-binding protein ALBA1 (248 aa).

The interval 217 to 248 (GRDGGYRGGNRGGSRSGFRGGRGGFRGGRALS) is disordered. The segment covering 222–248 (YRGGNRGGSRSGFRGGRGGFRGGRALS) has biased composition (gly residues).

Belongs to the histone-like Alba family. May form homodimers. Identified in a TARE6-associated complex consisting of over 30 proteins and including ALBA1, ALBA2 and ALBA4; the complex binds to the non-coding subtelomeric repeat region TARE6.

Its subcellular location is the nucleus. It localises to the chromosome. It is found in the telomere. The protein localises to the cytoplasm. Functionally, possesses DNA- and RNA-binding activities. During the asexual blood stages binds to a sub-population of mature mRNAs and regulates the timing of their translation. Binds to DNA with relaxed sequence specificity. Associates with the subtelomeric TARE6 repeats. The polypeptide is DNA/RNA-binding protein ALBA1 (Plasmodium falciparum (isolate 3D7)).